Reading from the N-terminus, the 66-residue chain is Nigrocin-2ISa (66 aa).

The first 22 residues, Met1–Cys22, serve as a signal peptide directing secretion. A propeptide spans Gln23–Ile43 (removed in mature form). Residues Cys60 and Cys66 are joined by a disulfide bond.

In terms of tissue distribution, expressed by the skin glands.

It localises to the secreted. Its function is as follows. Has antimicrobial activity against Gram-negative bacterium E.coli ATCC 8739 (MIC=25 ug), against Gram positive bacteria S.aureus ATCC 6538 (MIC=3.1 ug), methicillin-resistant S.aureus ATCC 43300 (MIC=12.5 ug), B.subtilis ATCC 6633 (MIC=12.5 ug) and against fungus C.albicans ATCC 90028 (MIC=50 ug). In Odorrana ishikawae (Ishikawa's frog), this protein is Nigrocin-2ISa.